The sequence spans 874 residues: MAAVDSDVESLPRGGFRCCLCHVTTANRPSLDAHLGGRKHRHLVELRAARKAQGLRSVFVSGFPRDVDSAQLSEYFLAFGPVASVVMDKDKGVFAIVEMGDVGAREAVLSQSQHSLGGHRLRVRPREQKEFQSPASKSPKGAAPDSHQLAKALAEAADVGAQMIKLVGLRELSEAERQLRSLVVALMQEVFTEFFPGCVVHPFGSSINSFDVHGCDLDLFLDLGDLEEPQPVPKAPESPSLDSALASPLDPQALACTPASPPDSQPPASPQDSEALDFETPSSSLAPQTPDSALASETLASPQSLPPASPLLEDREEGDLGKASELAETPKEEKAEGAAMLELVGSILRGCVPGVYRVQTVPSARRPVVKFCHRPSGLHGDVSLSNRLALHNSRFLSLCSELDGRVRPLVYTLRCWAQGRGLSGSGPLLSNYALTLLVIYFLQTRDPPVLPTVSQLTQKAGEGEQVEVDGWDCSFPRDASRLEPSINVEPLSSLLAQFFSCVSCWDLRGSLLSLREGQALPVAGGLPSNLWEGLRLGPLNLQDPFDLSHNVAANVTSRVAGRLQNCCRAAANYCRSLQYQRRSSRGRDWGLLPLLQPSSPSSLLSATPIPLPLAPFTQLTAALVQVFREALGCHIEQATKRTRSEGGGTGESSQGGTSKRLKVDGQKNCCEEGKEEQQGCAGDGGEDRVEEMVIEVGEMVQDWAMQSPGQPGDLPLTTGKHGAPGEEGQPSHAALAERGPKGHEAAQEWSQGEAGKGASLPSSASWRCALWHRVWQGRRRARRRLQQQTKEGAGGGAGTRAGWLATEAQVTQELKGLSGGEERPETEPLLSFVASVSPADRMLTVTPLQDPQGLFPDLHHFLQVFLPQAIRHLK.

The Matrin-type zinc-finger motif lies at 16–46 (FRCCLCHVTTANRPSLDAHLGGRKHRHLVEL). An RRM domain is found at 56–128 (RSVFVSGFPR…HRLRVRPREQ (73 aa)). The interval 113 to 146 (QHSLGGHRLRVRPREQKEFQSPASKSPKGAAPDS) is disordered. S205 contributes to the ATP binding site. 2 residues coordinate Mg(2+): D216 and D218. UTP is bound by residues D216 and D218. Residues 252–334 (QALACTPASP…ELAETPKEEK (83 aa)) form a disordered region. The segment covering 259 to 269 (ASPPDSQPPAS) has biased composition (pro residues). Residues 280 to 291 (TPSSSLAPQTPD) show a composition bias toward polar residues. An ATP-binding site is contributed by N392. UTP contacts are provided by N392, R414, Y432, and H549. Residues 491 to 549 (LSSLLAQFFSCVSCWDLRGSLLSLREGQALPVAGGLPSNLWEGLRLGPLNLQDPFDLSH) enclose the PAP-associated domain. The KA1; binds the bulging loops of U6 snRNA but is dispensable for terminal uridylyltransferase activity stretch occupies residues 598–874 (SSPSSLLSAT…FLPQAIRHLK (277 aa)). Disordered stretches follow at residues 638 to 662 (ATKR…KRLK) and 705 to 761 (MQSP…ASLP). S750 carries the phosphoserine modification.

The protein belongs to the DNA polymerase type-B-like family. As to quaternary structure, associates with the cleavage and polyadenylation specificity factor (CPSF) complex. Interacts with CPSF1 and CPSF3; the interaction is direct. Interacts with PIP5K1A. Mg(2+) is required as a cofactor. It depends on Mn(2+) as a cofactor. In terms of processing, phosphorylated by CK1 in the proline-rich (Pro-rich) region. Widely expressed.

The protein resides in the nucleus. Its subcellular location is the nucleolus. It is found in the nucleus speckle. The enzyme catalyses RNA(n) + UTP = RNA(n)-3'-uridine ribonucleotide + diphosphate. The catalysed reaction is RNA(n) + ATP = RNA(n)-3'-adenine ribonucleotide + diphosphate. Its activity is regulated as follows. Adenylyltransferase activity is specifically phosphatidylinositol 4,5-bisphosphate (PtdIns(4,5)P2). Poly(A) polymerase that creates the 3'-poly(A) tail of specific pre-mRNAs. Localizes to nuclear speckles together with PIP5K1A and mediates polyadenylation of a select set of mRNAs, such as HMOX1. In addition to polyadenylation, it is also required for the 3'-end cleavage of pre-mRNAs: binds to the 3'UTR of targeted pre-mRNAs and promotes the recruitment and assembly of the CPSF complex on the 3'UTR of pre-mRNAs. In addition to adenylyltransferase activity, also has uridylyltransferase activity. However, the ATP ratio is higher than UTP in cells, suggesting that it functions primarily as a poly(A) polymerase. Acts as a specific terminal uridylyltransferase for U6 snRNA in vitro: responsible for a controlled elongation reaction that results in the restoration of the four 3'-terminal UMP-residues found in newly transcribed U6 snRNA. Not involved in replication-dependent histone mRNA degradation. This Homo sapiens (Human) protein is Speckle targeted PIP5K1A-regulated poly(A) polymerase (TUT1).